A 171-amino-acid polypeptide reads, in one-letter code: Small ribosomal subunit protein uS5 (171 aa).

Residues 14–77 enclose the S5 DRBM domain; it reads YIEKLVNIRR…DKARKAMKNV (64 aa).

It belongs to the universal ribosomal protein uS5 family. As to quaternary structure, part of the 30S ribosomal subunit. Contacts proteins S4 and S8.

Its function is as follows. With S4 and S12 plays an important role in translational accuracy. Functionally, located at the back of the 30S subunit body where it stabilizes the conformation of the head with respect to the body. The sequence is that of Small ribosomal subunit protein uS5 from Vesicomyosocius okutanii subsp. Calyptogena okutanii (strain HA).